Consider the following 98-residue polypeptide: MKTLVLVAVLGVASLYLLSSASEVQQLSPAEEEFRAFVSTFGGLFETEERGVDSEDCRAMFGGCGEDNDCCLHLGCKTTKLPPFANPYCAWDGTTGRK.

Positions 1 to 21 (MKTLVLVAVLGVASLYLLSSA) are cleaved as a signal peptide. The propeptide occupies 22-50 (SEVQQLSPAEEEFRAFVSTFGGLFETEER). Intrachain disulfides connect Cys57-Cys71, Cys64-Cys76, and Cys70-Cys89.

This sequence belongs to the neurotoxin 10 (Hwtx-1) family. 27 (ICK-3) subfamily. In terms of tissue distribution, expressed by the venom gland.

The protein localises to the secreted. Functionally, ion channel inhibitor. This Trittame loki (Brush-footed trapdoor spider) protein is U10-barytoxin-Tl1a.